Consider the following 421-residue polypeptide: Aspartokinase (421 aa).

7 to 10 (KYGG) is an ATP binding site. 25-30 (RIVATK) serves as a coordination point for substrate. Ser41 contacts ATP. Residues 45 to 49 (DTTDE), Glu74, 125 to 126 (LD), 151 to 154 (RGGS), and Ser154 each bind substrate. Residues 174–175 (SD), 180–185 (YTADPR), and Lys210 each bind ATP. ACT domains follow at residues 267–343 (VTVL…YDDQ) and 349–421 (LVGA…GTGR). Substrate is bound by residues Asp274, 274–279 (DKPGEA), 292–294 (NID), Gln298, 360–361 (VT), 374–375 (NI), and 381–382 (SE).

This sequence belongs to the aspartokinase family. In terms of assembly, tetramer consisting of 2 isoforms Alpha (catalytic and regulation) and of a homodimer of 2 isoforms Beta (regulation). The dimerization of the beta isoforms is stabilized by the bonding of threonine.

It catalyses the reaction L-aspartate + ATP = 4-phospho-L-aspartate + ADP. It participates in amino-acid biosynthesis; L-lysine biosynthesis via DAP pathway; (S)-tetrahydrodipicolinate from L-aspartate: step 1/4. It functions in the pathway amino-acid biosynthesis; L-methionine biosynthesis via de novo pathway; L-homoserine from L-aspartate: step 1/3. Its pathway is amino-acid biosynthesis; L-threonine biosynthesis; L-threonine from L-aspartate: step 1/5. Its activity is regulated as follows. Feedback inhibition by lysine and threonine, but he enzyme is moderately inhibited by lysine alone, and threonine alone has no effect. Its function is as follows. Catalyzes the phosphorylation of the beta-carboxyl group of aspartic acid with ATP to yield 4-phospho-L-aspartate, which is involved in the branched biosynthetic pathway leading to the biosynthesis of amino acids lysine, threonine, isoleucine and methionine. The protein is Aspartokinase (lysC) of Corynebacterium glutamicum (strain ATCC 13032 / DSM 20300 / JCM 1318 / BCRC 11384 / CCUG 27702 / LMG 3730 / NBRC 12168 / NCIMB 10025 / NRRL B-2784 / 534).